A 151-amino-acid chain; its full sequence is Small ribosomal subunit protein uS15 (151 aa).

It belongs to the universal ribosomal protein uS15 family.

The protein is Small ribosomal subunit protein uS15 (RpS13) of Anopheles gambiae (African malaria mosquito).